The primary structure comprises 554 residues: Glutamine--tRNA ligase (554 aa).

The short motif at 34 to 44 (PEPNGYLHIGH) is the 'HIGH' region element. Residues 35-37 (EPN) and 41-47 (HIGHAKS) each bind ATP. Residues Asp67 and Tyr212 each coordinate L-glutamine. Residues Thr231, 261-262 (RL), and 269-271 (MSK) each bind ATP. The 'KMSKS' region motif lies at 268-272 (VMSKR). The interval 317–324 (TKQDNTIE) is interaction with tRNA.

The protein belongs to the class-I aminoacyl-tRNA synthetase family. Monomer.

The protein resides in the cytoplasm. It carries out the reaction tRNA(Gln) + L-glutamine + ATP = L-glutaminyl-tRNA(Gln) + AMP + diphosphate. The protein is Glutamine--tRNA ligase of Shigella dysenteriae serotype 1 (strain Sd197).